The chain runs to 338 residues: MNKFKNIAVYGGGSFGTSLASLAAQNCNNVTLFLRDEAIAKEILHNKTNVKYLGDIKLPAHLQATTNLDIIKDFELIIIAVPSYAFDDSIKLLKTHSISKDNTLLIATKGFARNPTTLFSDRLKTLLPHSPTAFFVGPNLAKELAKNLPASASIASLDIDIANKIAYNLSSKIFTTNVSSDIVTLQVAGALKNIFAIKSGIDLARKQGENARATLIVAALKEIAILSKALGGMQKNSDILLEGVVGDLVLTCYSLGSRNTKFGYELGISSDKKQFLQEYKELVEGREALKLVLDLIKKYNLHMPIISEVASCVIPYVIPAKAGMTYESTQQCLRRNDI.

NADPH contacts are provided by serine 14, phenylalanine 15, arginine 35, and lysine 109. Sn-glycerol 3-phosphate-binding residues include lysine 109 and glycine 137. Alanine 141 is a binding site for NADPH. Residues lysine 192, aspartate 247, serine 257, arginine 258, and asparagine 259 each contribute to the sn-glycerol 3-phosphate site. Lysine 192 acts as the Proton acceptor in catalysis. Arginine 258 is a binding site for NADPH. NADPH contacts are provided by leucine 282 and glutamate 284.

The protein belongs to the NAD-dependent glycerol-3-phosphate dehydrogenase family.

The protein resides in the cytoplasm. The enzyme catalyses sn-glycerol 3-phosphate + NAD(+) = dihydroxyacetone phosphate + NADH + H(+). The catalysed reaction is sn-glycerol 3-phosphate + NADP(+) = dihydroxyacetone phosphate + NADPH + H(+). Its pathway is membrane lipid metabolism; glycerophospholipid metabolism. Its function is as follows. Catalyzes the reduction of the glycolytic intermediate dihydroxyacetone phosphate (DHAP) to sn-glycerol 3-phosphate (G3P), the key precursor for phospholipid synthesis. In Rickettsia rickettsii (strain Iowa), this protein is Glycerol-3-phosphate dehydrogenase [NAD(P)+].